Here is a 541-residue protein sequence, read N- to C-terminus: Glutamyl-tRNA(Gln) amidotransferase subunit A, chloroplastic/mitochondrial (541 aa).

Catalysis depends on charge relay system residues K121 and S196. The Acyl-ester intermediate role is filled by S220.

It belongs to the amidase family. GatA subfamily. As to quaternary structure, subunit of the heterotrimeric GatCAB amidotransferase (AdT) complex, composed of A, B and C subunits.

The protein localises to the mitochondrion. Its subcellular location is the plastid. It localises to the chloroplast stroma. It catalyses the reaction L-glutamyl-tRNA(Gln) + L-glutamine + ATP + H2O = L-glutaminyl-tRNA(Gln) + L-glutamate + ADP + phosphate + H(+). In terms of biological role, allows the formation of correctly charged Gln-tRNA(Gln) through the transamidation of misacylated Glu-tRNA(Gln) in chloroplasts and mitochondria. The reaction takes place in the presence of glutamine and ATP through an activated gamma-phospho-Glu-tRNA(Gln). The protein is Glutamyl-tRNA(Gln) amidotransferase subunit A, chloroplastic/mitochondrial of Sorghum bicolor (Sorghum).